The sequence spans 576 residues: Beta-bisabolene synthase (576 aa).

(2E,6E)-farnesyl diphosphate contacts are provided by R286, D323, D327, R466, and N469. The Mg(2+) site is built by D323 and D327. The DDXXD motif signature appears at 323–327; that stretch reads DDVYD. Residues N469, T473, and E477 each contribute to the Mg(2+) site.

This sequence belongs to the terpene synthase family. Tpsb subfamily. Mg(2+) is required as a cofactor. The cofactor is Mn(2+).

Produces almost exclusively beta-bisabolene and only traces of alpha-bisabolol from (2E,6E)-farnesyl diphosphate in fragrance biosynthesis. This is Beta-bisabolene synthase from Santalum austrocaledonicum (Sandalwood).